A 246-amino-acid chain; its full sequence is tRNA (guanine-N(1)-)-methyltransferase (246 aa).

Residues Gly-114 and Leu-133 to Leu-138 each bind S-adenosyl-L-methionine.

The protein belongs to the RNA methyltransferase TrmD family. Homodimer.

It localises to the cytoplasm. The catalysed reaction is guanosine(37) in tRNA + S-adenosyl-L-methionine = N(1)-methylguanosine(37) in tRNA + S-adenosyl-L-homocysteine + H(+). Specifically methylates guanosine-37 in various tRNAs. This is tRNA (guanine-N(1)-)-methyltransferase from Enterococcus faecalis (strain ATCC 700802 / V583).